Here is a 3123-residue protein sequence, read N- to C-terminus: Protein bark beetle (3123 aa).

The signal sequence occupies residues 1-34 (MKLQHHKTNRQRISKPHRDPKWASICLWLLVTLA). Topologically, residues 35–2714 (FSTHLARSQE…IIDPLSWRAD (2680 aa)) are extracellular. The segment at 83 to 104 (DVTVAPQGSTPSMTSSSSYTEL) is disordered. Over residues 91–102 (STPSMTSSSSYT) the composition is skewed to low complexity. The SRCR 1 domain occupies 191-295 (IRLVDGPTPV…YHNDLGIQCL (105 aa)). Cystine bridges form between C216–C284, C231–C294, and C262–C272. N221 is a glycosylation site (N-linked (GlcNAc...) asparagine). PbH1 repeat units lie at residues 358–380 (GLPP…NSTR), 382–404 (WAGF…FVNS), and 406–428 (QGAV…KYVG). N-linked (GlcNAc...) asparagine glycosylation is found at N377, N389, and N403. An intrachain disulfide couples C446 to C474. One can recognise a CUB domain in the interval 446–559 (CTLPTTSGQT…NGFFRMTSGD (114 aa)). N-linked (GlcNAc...) asparagine glycosylation is found at N498 and N523. PbH1 repeat units follow at residues 562-584 (AYDL…AIDN), 586-609 (RSKL…HVTS), and 611-633 (AGDV…NITY). Residues N615, N620, N630, N639, N658, N672, N702, and N709 are each glycosylated (N-linked (GlcNAc...) asparagine). PbH1 repeat units follow at residues 756-778 (NLQG…FINN) and 789-809 (PVKL…HVVS). Residues N834, N900, and N1040 are each glycosylated (N-linked (GlcNAc...) asparagine). An SRCR 2 domain is found at 1071-1175 (VRLVGGAGAN…HENDVGLRCY (105 aa)). Disulfide bonds link C1096/C1164, C1109/C1174, and C1144/C1154. PbH1 repeat units follow at residues 1219–1241 (HARH…GIIY) and 1248–1270 (KSVN…SLKQ). A glycan (N-linked (GlcNAc...) asparagine) is linked at N1375. PbH1 repeat units follow at residues 1451–1475 (VPTL…YYNR) and 1489–1511 (NESI…LIRS). N1489, N1520, and N1529 each carry an N-linked (GlcNAc...) asparagine glycan. The stretch at 1553-1575 (LFHYVIQDTTFEQNTHGGFQVSL) is one PbH1 13 repeat. N-linked (GlcNAc...) asparagine glycans are attached at residues N1584, N1593, and N1614. A PbH1 14 repeat occupies 1722-1744 (LYRNLIAENEMDYNLVAGVRSAR). N-linked (GlcNAc...) asparagine glycans are attached at residues N1883, N1920, and N1940. The 126-residue stretch at 1912–2037 (IRLCTSANNC…DDVFVFVSCN (126 aa)) folds into the SRCR 3 domain. Cystine bridges form between C1950/C2025, C1963/C2036, and C2000/C2010. PbH1 repeat units follow at residues 2104–2126 (HKNP…NMIA) and 2128–2150 (SGKL…SIVS). N-linked (GlcNAc...) asparagine glycosylation is found at N2139, N2231, N2251, N2314, and N2357. 3 PbH1 repeats span residues 2337-2361 (TPTL…FSTC), 2372-2393 (MNSL…RIRA), and 2401-2424 (SLRG…YVEG). N-linked (GlcNAc...) asparagine glycosylation is found at N2459, N2536, N2546, N2566, N2596, and N2636. A helical transmembrane segment spans residues 2715-2735 (IFAISIISAFVLAIILLILVA). Over 2736 to 3123 (FCWFAKSKHR…SHSQPLETAM (388 aa)) the chain is Cytoplasmic. Disordered stretches follow at residues 2766–2789 (IDPQ…LSKG), 2961–2983 (YQRS…PFDQ), 2996–3015 (LYRP…ADMR), and 3025–3123 (RSSK…ETAM). The span at 2778–2788 (YNMSSNGTLSK) shows a compositional bias: polar residues. Over residues 2964–2973 (SSHSSFMPHR) the composition is skewed to low complexity. 2 stretches are compositionally biased toward low complexity: residues 3047 to 3057 (PNVAPAGGPAQ) and 3068 to 3078 (SEESSPTTPSP). Over residues 3107–3123 (PLQTNGRSHSQPLETAM) the composition is skewed to polar residues.

In terms of processing, N-glycosylated. Post-translationally, may be proteolytically cleaved in the extracellular domain. In terms of tissue distribution, expression detected in embryonic epithelia and central nervous system (at protein level). First detected during stage 13 in the tracheal system, the foregut, the hindgut, the salivary glands and the epidermis. Expression persists in these tissues until the end of embryogenesis. Expression in epithelia declines from late stage 15 and expression appears in the central nervous system during stage 16.

It localises to the cell membrane. Its subcellular location is the cell junction. It is found in the septate junction. The protein resides in the adherens junction. Functionally, required for the maturation but not the establishment of septate junctions in developing epithelial cells and is involved in epithelial cell adhesion during septate junction maturation. Plays a role in the proper localization of the septate junction core components pck/mega, kune, Nrx-IV and Nrg during late embryogenesis. Involved in the formation of tricellular junctions which mediate cell contact where three epithelial cells meet but not of bicellular junctions. Required for the accumulation of Gli at tricellular junctions. This is Protein bark beetle from Drosophila melanogaster (Fruit fly).